Consider the following 300-residue polypeptide: Formamidopyrimidine-DNA glycosylase (300 aa).

Catalysis depends on P2, which acts as the Schiff-base intermediate with DNA. Residue E3 is the Proton donor of the active site. The Proton donor; for beta-elimination activity role is filled by K60. 3 residues coordinate DNA: H108, R136, and R181. Residues 266 to 300 (WVYSRAGQPCRICNTPLEKIKLAGRSTHFCPQCQK) form an FPG-type zinc finger. R290 acts as the Proton donor; for delta-elimination activity in catalysis.

The protein belongs to the FPG family. Monomer. Zn(2+) is required as a cofactor.

The catalysed reaction is Hydrolysis of DNA containing ring-opened 7-methylguanine residues, releasing 2,6-diamino-4-hydroxy-5-(N-methyl)formamidopyrimidine.. It carries out the reaction 2'-deoxyribonucleotide-(2'-deoxyribose 5'-phosphate)-2'-deoxyribonucleotide-DNA = a 3'-end 2'-deoxyribonucleotide-(2,3-dehydro-2,3-deoxyribose 5'-phosphate)-DNA + a 5'-end 5'-phospho-2'-deoxyribonucleoside-DNA + H(+). Functionally, involved in base excision repair of DNA damaged by oxidation or by mutagenic agents. Acts as a DNA glycosylase that recognizes and removes damaged bases. Has a preference for oxidized purines, such as 7,8-dihydro-8-oxoguanine (8-oxoG). Has AP (apurinic/apyrimidinic) lyase activity and introduces nicks in the DNA strand. Cleaves the DNA backbone by beta-delta elimination to generate a single-strand break at the site of the removed base with both 3'- and 5'-phosphates. This Trichodesmium erythraeum (strain IMS101) protein is Formamidopyrimidine-DNA glycosylase.